Reading from the N-terminus, the 382-residue chain is Alpha-methylacyl-CoA racemase (382 aa).

Substrate is bound by residues Arg-36 and 55–58 (LDLK). Lys-58 carries the N6-acetyllysine modification. Lys-87 carries the N6-acetyllysine; alternate modification. Lys-87 is modified (N6-succinyllysine; alternate). Position 121–126 (121–126 (GHDINY)) interacts with substrate. His-122 serves as the catalytic Proton acceptor. Catalysis depends on Asp-152, which acts as the Proton donor. Lys-268 is subject to N6-succinyllysine. The Microbody targeting signal motif lies at 380 to 382 (ASL).

This sequence belongs to the CoA-transferase III family. In terms of assembly, monomer.

It is found in the peroxisome. The protein localises to the mitochondrion. The enzyme catalyses a (2S)-2-methylacyl-CoA = a (2R)-2-methylacyl-CoA. It catalyses the reaction (25R)-3alpha,7alpha,12alpha-trihydroxy-5beta-cholestan-26-oyl-CoA = (25S)-3alpha,7alpha,12alpha-trihydroxy-5beta-cholestan-26-oyl-CoA. The catalysed reaction is (2R,6)-dimethylheptanoyl-CoA = (2S,6)-dimethylheptanoyl-CoA. It functions in the pathway lipid metabolism; bile acid biosynthesis. The protein operates within lipid metabolism; fatty acid metabolism. Functionally, catalyzes the interconversion of (R)- and (S)-stereoisomers of alpha-methyl-branched-chain fatty acyl-CoA esters. Acts only on coenzyme A thioesters, not on free fatty acids, and accepts as substrates a wide range of alpha-methylacyl-CoAs, including pristanoyl-CoA, trihydroxycoprostanoyl-CoA (an intermediate in bile acid synthesis), and arylpropionic acids like the anti-inflammatory drug ibuprofen (2-(4-isobutylphenyl)propionic acid) but neither 3-methyl-branched nor linear-chain acyl-CoAs. In Homo sapiens (Human), this protein is Alpha-methylacyl-CoA racemase (AMACR).